Reading from the N-terminus, the 344-residue chain is Holliday junction branch migration complex subunit RuvB (344 aa).

A large ATPase domain (RuvB-L) region spans residues Met-1–Tyr-182. Residues Ile-21, Arg-22, Gly-63, Lys-66, Thr-67, Thr-68, Glu-129–Phe-131, Arg-172, Tyr-182, and Arg-219 each bind ATP. Thr-67 serves as a coordination point for Mg(2+). Residues Pro-183 to Glu-253 are small ATPAse domain (RuvB-S). Residues Glu-256–Val-344 are head domain (RuvB-H). Residues Arg-311 and Arg-316 each contribute to the DNA site.

This sequence belongs to the RuvB family. In terms of assembly, homohexamer. Forms an RuvA(8)-RuvB(12)-Holliday junction (HJ) complex. HJ DNA is sandwiched between 2 RuvA tetramers; dsDNA enters through RuvA and exits via RuvB. An RuvB hexamer assembles on each DNA strand where it exits the tetramer. Each RuvB hexamer is contacted by two RuvA subunits (via domain III) on 2 adjacent RuvB subunits; this complex drives branch migration. In the full resolvosome a probable DNA-RuvA(4)-RuvB(12)-RuvC(2) complex forms which resolves the HJ.

The protein localises to the cytoplasm. It catalyses the reaction ATP + H2O = ADP + phosphate + H(+). Functionally, the RuvA-RuvB-RuvC complex processes Holliday junction (HJ) DNA during genetic recombination and DNA repair, while the RuvA-RuvB complex plays an important role in the rescue of blocked DNA replication forks via replication fork reversal (RFR). RuvA specifically binds to HJ cruciform DNA, conferring on it an open structure. The RuvB hexamer acts as an ATP-dependent pump, pulling dsDNA into and through the RuvAB complex. RuvB forms 2 homohexamers on either side of HJ DNA bound by 1 or 2 RuvA tetramers; 4 subunits per hexamer contact DNA at a time. Coordinated motions by a converter formed by DNA-disengaged RuvB subunits stimulates ATP hydrolysis and nucleotide exchange. Immobilization of the converter enables RuvB to convert the ATP-contained energy into a lever motion, pulling 2 nucleotides of DNA out of the RuvA tetramer per ATP hydrolyzed, thus driving DNA branch migration. The RuvB motors rotate together with the DNA substrate, which together with the progressing nucleotide cycle form the mechanistic basis for DNA recombination by continuous HJ branch migration. Branch migration allows RuvC to scan DNA until it finds its consensus sequence, where it cleaves and resolves cruciform DNA. The polypeptide is Holliday junction branch migration complex subunit RuvB (Chlorobium luteolum (strain DSM 273 / BCRC 81028 / 2530) (Pelodictyon luteolum)).